A 397-amino-acid polypeptide reads, in one-letter code: S-adenosylmethionine synthase (397 aa).

An ATP-binding site is contributed by His-16. Asp-18 serves as a coordination point for Mg(2+). Glu-44 is a binding site for K(+). Residues Glu-57 and Gln-100 each contribute to the L-methionine site. The segment at 100-110 (QSPDIAQGVNE) is flexible loop. Residues 175–177 (DAK), 242–243 (RF), Asp-251, 257–258 (RK), Ala-274, and Lys-278 contribute to the ATP site. Asp-251 provides a ligand contact to L-methionine. Lys-282 is an L-methionine binding site.

Belongs to the AdoMet synthase family. As to quaternary structure, homotetramer; dimer of dimers. The cofactor is Mg(2+). K(+) serves as cofactor.

It is found in the cytoplasm. It catalyses the reaction L-methionine + ATP + H2O = S-adenosyl-L-methionine + phosphate + diphosphate. It functions in the pathway amino-acid biosynthesis; S-adenosyl-L-methionine biosynthesis; S-adenosyl-L-methionine from L-methionine: step 1/1. In terms of biological role, catalyzes the formation of S-adenosylmethionine (AdoMet) from methionine and ATP. The overall synthetic reaction is composed of two sequential steps, AdoMet formation and the subsequent tripolyphosphate hydrolysis which occurs prior to release of AdoMet from the enzyme. This Streptococcus thermophilus (strain ATCC BAA-250 / LMG 18311) protein is S-adenosylmethionine synthase.